The sequence spans 825 residues: Probable ATP-dependent RNA helicase DDX20 (825 aa).

Positions 27-50 are disordered; sequence PVQAVEPTPASPWTQRTAHDIGGP. The Q motif signature appears at 63-91; the sequence is ADFESLLLSRPVLEGLRAAGFERPSPVQL. ATP-binding positions include arginine 85, glutamine 90, 107–114, and 110–115; these read AKSGTGKT and GTGKTC. A Helicase ATP-binding domain is found at 94 to 265; it reads IPLGRCGLDL…TRYMRDPTFV (172 aa). Serine 188 carries the phosphoserine modification. The DEAD box signature appears at 212–215; sequence DEAD. Residue serine 270 is modified to Phosphoserine. Residues 300–449 enclose the Helicase C-terminal domain; it reads HLQELFSKVP…PIPPGLMEEC (150 aa). 2 stretches are compositionally biased toward polar residues: residues 465–475 and 484–504; these read SPTVATQSPKK and FQSQRTPGNQTPSPRNTSASA. Disordered regions lie at residues 465–573 and 642–753; these read SPTV…PGSL and QMLV…EPQE. Phosphoserine occurs at positions 472, 501, and 506. Over residues 508 to 518 the composition is skewed to basic residues; the sequence is RPKHSKPKLPV. The span at 547-571 shows a compositional bias: polar residues; sequence KNSVQTSVEDSSSNSQHQAKDSSPG. Threonine 552 carries the phosphothreonine modification. Phosphoserine is present on residues serine 561, serine 653, serine 655, serine 657, serine 673, serine 678, and serine 679. The span at 646–668 shows a compositional bias: low complexity; it reads SSSQSGDSESDSDSCSSRTSSQS. A phosphothreonine mark is found at threonine 689 and threonine 706. Positions 698-711 are enriched in polar residues; sequence EQVQNGNDTPTQVE. Over residues 733-744 the composition is skewed to basic residues; it reads KQSRRNPARRSS.

It belongs to the DEAD box helicase family. DDX20 subfamily. In terms of assembly, part of the core SMN complex that contains SMN1, GEMIN2/SIP1, DDX20/GEMIN3, GEMIN4, GEMIN5, GEMIN6, GEMIN7, GEMIN8 and STRAP/UNRIP. Part of the SMN-Sm complex that contains SMN1, GEMIN2/SIP1, DDX20/GEMIN3, GEMIN4, GEMIN5, GEMIN6, GEMIN7, GEMIN8, STRAP/UNRIP and the Sm proteins SNRPB, SNRPD1, SNRPD2, SNRPD3, SNRPE, SNRPF and SNRPG. Interacts with SMN1; the interaction is direct. Interacts with GEMIN4; the interaction is direct. Interacts with GEMIN5. Interacts with SNUPN; the interaction is direct. Interacts with PPP4R2. Interacts with FOXL2. Interacts with NANOS1 and PUM2.

It is found in the cytoplasm. The protein resides in the nucleus. It localises to the gem. It catalyses the reaction ATP + H2O = ADP + phosphate + H(+). The enzyme catalyses a ribonucleoside 5'-triphosphate + H2O = a ribonucleoside 5'-diphosphate + phosphate + H(+). In terms of biological role, the SMN complex catalyzes the assembly of small nuclear ribonucleoproteins (snRNPs), the building blocks of the spliceosome, and thereby plays an important role in the splicing of cellular pre-mRNAs. Most spliceosomal snRNPs contain a common set of Sm proteins SNRPB, SNRPD1, SNRPD2, SNRPD3, SNRPE, SNRPF and SNRPG that assemble in a heptameric protein ring on the Sm site of the small nuclear RNA to form the core snRNP (Sm core). In the cytosol, the Sm proteins SNRPD1, SNRPD2, SNRPE, SNRPF and SNRPG are trapped in an inactive 6S pICln-Sm complex by the chaperone CLNS1A that controls the assembly of the core snRNP. To assemble core snRNPs, the SMN complex accepts the trapped 5Sm proteins from CLNS1A forming an intermediate. Binding of snRNA inside 5Sm triggers eviction of the SMN complex, thereby allowing binding of SNRPD3 and SNRPB to complete assembly of the core snRNP. May also play a role in the metabolism of small nucleolar ribonucleoprotein (snoRNPs). This Mus musculus (Mouse) protein is Probable ATP-dependent RNA helicase DDX20 (Ddx20).